We begin with the raw amino-acid sequence, 226 residues long: Lipoprotein-releasing system ATP-binding protein LolD 1 (226 aa).

An ABC transporter domain is found at 5 to 225; the sequence is LKLDGIRKSY…IVRVVDGKIA (221 aa). An ATP-binding site is contributed by 42–49; that stretch reads GPSGSGKS.

It belongs to the ABC transporter superfamily. Lipoprotein translocase (TC 3.A.1.125) family. In terms of assembly, the complex is composed of two ATP-binding proteins (LolD) and two transmembrane proteins (LolC and LolE).

The protein resides in the cell inner membrane. In terms of biological role, part of the ABC transporter complex LolCDE involved in the translocation of mature outer membrane-directed lipoproteins, from the inner membrane to the periplasmic chaperone, LolA. Responsible for the formation of the LolA-lipoprotein complex in an ATP-dependent manner. This chain is Lipoprotein-releasing system ATP-binding protein LolD 1, found in Rhodopseudomonas palustris (strain ATCC BAA-98 / CGA009).